The primary structure comprises 523 residues: Ribosomal protein uS12 methylthiotransferase RimO (523 aa).

Residues 7–134 (RRVALITLGC…IATHLAAVLA (128 aa)) enclose the MTTase N-terminal domain. Cysteine 16, cysteine 52, cysteine 97, cysteine 192, cysteine 196, and cysteine 199 together coordinate [4Fe-4S] cluster. The region spanning 178 to 409 (LTAGPVAVLK…DLVEQLTAAR (232 aa)) is the Radical SAM core domain. In terms of domain architecture, TRAM spans 411–492 (DARIGSRVQV…GVDLIAEFIA (82 aa)).

Belongs to the methylthiotransferase family. RimO subfamily. It depends on [4Fe-4S] cluster as a cofactor.

It localises to the cytoplasm. The catalysed reaction is L-aspartate(89)-[ribosomal protein uS12]-hydrogen + (sulfur carrier)-SH + AH2 + 2 S-adenosyl-L-methionine = 3-methylsulfanyl-L-aspartate(89)-[ribosomal protein uS12]-hydrogen + (sulfur carrier)-H + 5'-deoxyadenosine + L-methionine + A + S-adenosyl-L-homocysteine + 2 H(+). Functionally, catalyzes the methylthiolation of an aspartic acid residue of ribosomal protein uS12. The sequence is that of Ribosomal protein uS12 methylthiotransferase RimO from Frankia casuarinae (strain DSM 45818 / CECT 9043 / HFP020203 / CcI3).